A 452-amino-acid chain; its full sequence is Ribosome biogenesis protein YTM1 (452 aa).

Residues 17-98 (IVSQPVVFTT…EETLEIEYIE (82 aa)) form a ubiquitin-like (UBL) domain region. 3 WD repeats span residues 110–148 (PHED…TASI), 150–195 (AHPA…NPMA), and 208–247 (LHTA…TDEV). The tract at residues 245 to 269 (DEVPEPALNERDRSKKRRRVEEGEV) is disordered. Residues 252-269 (LNERDRSKKRRRVEEGEV) are compositionally biased toward basic and acidic residues. WD repeat units follow at residues 282–322 (SHTA…CSHT), 325–364 (ASEK…TILT), 371–411 (MHPS…SAMA), and 418–452 (GSGQ…EQKV).

It belongs to the WD repeat WDR12/YTM1 family. Component of the NOP7 complex, composed of ERB1, NOP7 and YTM1. The complex is held together by ERB1, which interacts with NOP7 via its N-terminal domain and with YTM1 via a high-affinity interaction between the seven-bladed beta-propeller domains of the 2 proteins. The NOP7 complex associates with the 66S pre-ribosome. Interacts (via UBL domain) with MDN1 (via VWFA/MIDAS domain).

Its subcellular location is the nucleus. It is found in the nucleolus. It localises to the nucleoplasm. Functionally, component of the NOP7 complex, which is required for maturation of the 25S and 5.8S ribosomal RNAs and formation of the 60S ribosome. This Laccaria bicolor (strain S238N-H82 / ATCC MYA-4686) (Bicoloured deceiver) protein is Ribosome biogenesis protein YTM1.